Here is a 185-residue protein sequence, read N- to C-terminus: Elongation factor P (185 aa).

The protein belongs to the elongation factor P family.

It is found in the cytoplasm. It functions in the pathway protein biosynthesis; polypeptide chain elongation. In terms of biological role, involved in peptide bond synthesis. Stimulates efficient translation and peptide-bond synthesis on native or reconstituted 70S ribosomes in vitro. Probably functions indirectly by altering the affinity of the ribosome for aminoacyl-tRNA, thus increasing their reactivity as acceptors for peptidyl transferase. The sequence is that of Elongation factor P from Bacillus cereus (strain G9842).